The primary structure comprises 108 residues: Evasin P1156 (108 aa).

An N-terminal signal peptide occupies residues Met1 to Ala28. 3 cysteine pairs are disulfide-bonded: Cys41-Cys63, Cys45-Cys65, and Cys56-Cys76. A glycan (N-linked (GlcNAc...) asparagine) is linked at Asn44. Positions Asn89–His108 are disordered. The span at Glu96 to His108 shows a compositional bias: basic and acidic residues.

It localises to the secreted. Salivary chemokine-binding protein which has chemokine-neutralizing activity and binds to host chemokines CXCL1, CXCL2, CXCL3, CXCL5, CXCL6 and CXCL8. The chain is Evasin P1156 from Ixodes ricinus (Common tick).